The chain runs to 483 residues: Glutamyl-tRNA(Gln) amidotransferase subunit A (483 aa).

Active-site charge relay system residues include Lys-77 and Ser-152. Ser-176 (acyl-ester intermediate) is an active-site residue.

This sequence belongs to the amidase family. GatA subfamily. Heterotrimer of A, B and C subunits.

It carries out the reaction L-glutamyl-tRNA(Gln) + L-glutamine + ATP + H2O = L-glutaminyl-tRNA(Gln) + L-glutamate + ADP + phosphate + H(+). In terms of biological role, allows the formation of correctly charged Gln-tRNA(Gln) through the transamidation of misacylated Glu-tRNA(Gln) in organisms which lack glutaminyl-tRNA synthetase. The reaction takes place in the presence of glutamine and ATP through an activated gamma-phospho-Glu-tRNA(Gln). This chain is Glutamyl-tRNA(Gln) amidotransferase subunit A, found in Listeria welshimeri serovar 6b (strain ATCC 35897 / DSM 20650 / CCUG 15529 / CIP 8149 / NCTC 11857 / SLCC 5334 / V8).